We begin with the raw amino-acid sequence, 91 residues long: Small ribosomal subunit protein uS19 (91 aa).

Belongs to the universal ribosomal protein uS19 family.

Functionally, protein S19 forms a complex with S13 that binds strongly to the 16S ribosomal RNA. The protein is Small ribosomal subunit protein uS19 of Pseudomonas fluorescens (strain SBW25).